We begin with the raw amino-acid sequence, 46 residues long: Protein YmiA (46 aa).

Residues 22 to 42 form a helical membrane-spanning segment; it reads AWLAVFLGSALFWVVVALLIW.

The protein localises to the cell inner membrane. The sequence is that of Protein YmiA (ymiA) from Escherichia coli (strain K12).